A 99-amino-acid chain; its full sequence is Large ribosomal subunit protein uL23 (99 aa).

Belongs to the universal ribosomal protein uL23 family. In terms of assembly, part of the 50S ribosomal subunit. Contacts protein L29, and trigger factor when it is bound to the ribosome.

Functionally, one of the early assembly proteins it binds 23S rRNA. One of the proteins that surrounds the polypeptide exit tunnel on the outside of the ribosome. Forms the main docking site for trigger factor binding to the ribosome. The protein is Large ribosomal subunit protein uL23 of Hydrogenobaculum sp. (strain Y04AAS1).